The sequence spans 102 residues: Ribosomal silencing factor RsfS (102 aa).

This sequence belongs to the Iojap/RsfS family. In terms of assembly, interacts with ribosomal protein uL14 (rplN).

It is found in the cytoplasm. In terms of biological role, functions as a ribosomal silencing factor. Interacts with ribosomal protein uL14 (rplN), blocking formation of intersubunit bridge B8. Prevents association of the 30S and 50S ribosomal subunits and the formation of functional ribosomes, thus repressing translation. In Haemophilus influenzae (strain ATCC 51907 / DSM 11121 / KW20 / Rd), this protein is Ribosomal silencing factor RsfS.